We begin with the raw amino-acid sequence, 442 residues long: tRNA modification GTPase MnmE (442 aa).

Positions 24, 84, and 124 each coordinate (6S)-5-formyl-5,6,7,8-tetrahydrofolate. The TrmE-type G domain occupies 218-366 (GARVALFGPV…LRDDMLGRLW (149 aa)). GTP is bound by residues 228–233 (NAGKST), 247–253 (DDEPGTT), and 272–275 (DTAG). Residues Ser232 and Thr253 each coordinate Mg(2+). Lys442 is a binding site for (6S)-5-formyl-5,6,7,8-tetrahydrofolate.

This sequence belongs to the TRAFAC class TrmE-Era-EngA-EngB-Septin-like GTPase superfamily. TrmE GTPase family. As to quaternary structure, homodimer. Heterotetramer of two MnmE and two MnmG subunits. It depends on K(+) as a cofactor.

The protein localises to the cytoplasm. Functionally, exhibits a very high intrinsic GTPase hydrolysis rate. Involved in the addition of a carboxymethylaminomethyl (cmnm) group at the wobble position (U34) of certain tRNAs, forming tRNA-cmnm(5)s(2)U34. This chain is tRNA modification GTPase MnmE, found in Myxococcus xanthus (strain DK1622).